The chain runs to 261 residues: Zinc finger protein 664 (261 aa).

9 consecutive C2H2-type zinc fingers follow at residues 3-25, 31-53, 59-81, 87-109, 115-137, 143-165, 171-193, 199-221, and 227-249; these read YKCP…QKIH, HKCD…WRDH, YKCD…KKIH, YKCY…MRVH, YVCS…QRVH, FKCE…QRVH, YKCY…QRVH, YRCC…QRVH, and FKCD…QRVH. K257 is covalently cross-linked (Glycyl lysine isopeptide (Lys-Gly) (interchain with G-Cter in SUMO2)).

This sequence belongs to the krueppel C2H2-type zinc-finger protein family.

The protein resides in the nucleus. In terms of biological role, may be involved in transcriptional regulation. The protein is Zinc finger protein 664 of Homo sapiens (Human).